An 832-amino-acid polypeptide reads, in one-letter code: Translation initiation factor IF-2 (832 aa).

The segment covering 1–10 has biased composition (basic and acidic residues); sequence MLMSDVEKFG. Disordered stretches follow at residues 1–87, 120–148, and 163–201; these read MLMS…SRSA, RDEE…PAAA, and IAPG…GGGG. Positions 11 to 20 are enriched in gly residues; the sequence is GDCGSSGGSG. Polar residues-rich tracts occupy residues 29–42 and 71–87; these read RAST…STGG and SPYT…SRSA. The 170-residue stretch at 331–500 folds into the tr-type G domain; sequence PRPPVVTVMG…LLLAEMLELR (170 aa). A G1 region spans residues 340–347; the sequence is GHVDHGKT. 340-347 provides a ligand contact to GTP; it reads GHVDHGKT. Residues 365–369 form a G2 region; the sequence is GITQH. Positions 386–389 are G3; sequence DTPG. GTP-binding positions include 386-390 and 440-443; these read DTPGH and NKID. The tract at residues 440–443 is G4; that stretch reads NKID. The interval 476–478 is G5; sequence SAK.

It belongs to the TRAFAC class translation factor GTPase superfamily. Classic translation factor GTPase family. IF-2 subfamily.

Its subcellular location is the cytoplasm. In terms of biological role, one of the essential components for the initiation of protein synthesis. Protects formylmethionyl-tRNA from spontaneous hydrolysis and promotes its binding to the 30S ribosomal subunits. Also involved in the hydrolysis of GTP during the formation of the 70S ribosomal complex. The chain is Translation initiation factor IF-2 from Anaplasma marginale (strain St. Maries).